The following is a 189-amino-acid chain: Nucleoside triphosphate pyrophosphatase (189 aa).

Asp70 functions as the Proton acceptor in the catalytic mechanism.

This sequence belongs to the Maf family. A divalent metal cation serves as cofactor.

It localises to the cytoplasm. The enzyme catalyses a ribonucleoside 5'-triphosphate + H2O = a ribonucleoside 5'-phosphate + diphosphate + H(+). It carries out the reaction a 2'-deoxyribonucleoside 5'-triphosphate + H2O = a 2'-deoxyribonucleoside 5'-phosphate + diphosphate + H(+). Nucleoside triphosphate pyrophosphatase. May have a dual role in cell division arrest and in preventing the incorporation of modified nucleotides into cellular nucleic acids. The polypeptide is Nucleoside triphosphate pyrophosphatase (Xylella fastidiosa (strain 9a5c)).